A 276-amino-acid chain; its full sequence is Beta-lactamase OXA-1 (276 aa).

The first 25 residues, 1 to 25 (MKNTIHINFAIFLIIANIIYSSASA), serve as a signal peptide directing secretion. Residue S71 is the Acyl-ester intermediate of the active site. A beta-lactam is bound by residues S71, K74, S118, T216, and A218. The residue at position 74 (K74) is an N6-carboxylysine.

This sequence belongs to the class-D beta-lactamase family. Monomer.

Its subcellular location is the periplasm. It catalyses the reaction a beta-lactam + H2O = a substituted beta-amino acid. Inhibited by penicillin sulfones. Only weakly inhibited by clavulanic acid and sulbactam. Functionally, class D beta-lactamase which confers resistance to the beta-lactam antibiotics, including amoxicillin and ticarcillin. Acts via hydrolysis of the beta-lactam ring. Has penicillin- and cephalosporin-hydrolyzing activities. In Escherichia coli, this protein is Beta-lactamase OXA-1.